A 190-amino-acid polypeptide reads, in one-letter code: Nucleoside triphosphate pyrophosphatase (190 aa).

Catalysis depends on Asp-69, which acts as the Proton acceptor.

Belongs to the Maf family. A divalent metal cation is required as a cofactor.

It localises to the cytoplasm. The enzyme catalyses a ribonucleoside 5'-triphosphate + H2O = a ribonucleoside 5'-phosphate + diphosphate + H(+). The catalysed reaction is a 2'-deoxyribonucleoside 5'-triphosphate + H2O = a 2'-deoxyribonucleoside 5'-phosphate + diphosphate + H(+). Its function is as follows. Nucleoside triphosphate pyrophosphatase. May have a dual role in cell division arrest and in preventing the incorporation of modified nucleotides into cellular nucleic acids. The protein is Nucleoside triphosphate pyrophosphatase of Helicobacter pylori (strain P12).